The chain runs to 963 residues: Glycine dehydrogenase (decarboxylating) (963 aa).

Lys707 carries the post-translational modification N6-(pyridoxal phosphate)lysine.

The protein belongs to the GcvP family. In terms of assembly, the glycine cleavage system is composed of four proteins: P, T, L and H. Requires pyridoxal 5'-phosphate as cofactor.

The enzyme catalyses N(6)-[(R)-lipoyl]-L-lysyl-[glycine-cleavage complex H protein] + glycine + H(+) = N(6)-[(R)-S(8)-aminomethyldihydrolipoyl]-L-lysyl-[glycine-cleavage complex H protein] + CO2. Functionally, the glycine cleavage system catalyzes the degradation of glycine. The P protein binds the alpha-amino group of glycine through its pyridoxal phosphate cofactor; CO(2) is released and the remaining methylamine moiety is then transferred to the lipoamide cofactor of the H protein. The polypeptide is Glycine dehydrogenase (decarboxylating) (Dechloromonas aromatica (strain RCB)).